A 618-amino-acid chain; its full sequence is Camphene synthase, chloroplastic (618 aa).

The N-terminal 51 residues, M1–V51, are a transit peptide targeting the chloroplast. 3 residues coordinate Mg(2+): D369, D373, and D521. Positions D369 to D373 match the DDXXD motif motif.

This sequence belongs to the terpene synthase family. Tpsd subfamily. The cofactor is Mg(2+). Mn(2+) is required as a cofactor. It depends on K(+) as a cofactor.

The protein localises to the plastid. Its subcellular location is the chloroplast. The enzyme catalyses (2E)-geranyl diphosphate = (1S,4R)-camphene + diphosphate. The protein operates within terpene metabolism; oleoresin biosynthesis. In terms of biological role, involved in defensive oleoresin formation in conifers in response to insect attack or other injury. Involved in monoterpene (C10) olefins biosynthesis. The chain is Camphene synthase, chloroplastic (ag6) from Abies grandis (Grand fir).